Here is a 159-residue protein sequence, read N- to C-terminus: Phosphopantetheine adenylyltransferase (159 aa).

Substrate is bound at residue Thr10. Residues 10–11 and His18 each bind ATP; that span reads TF. 3 residues coordinate substrate: Lys42, Met74, and Arg88. Residues 89–91, Glu99, and 124–130 each bind ATP; these read GLR and WSFISSS.

It belongs to the bacterial CoaD family. As to quaternary structure, homohexamer. Mg(2+) is required as a cofactor.

Its subcellular location is the cytoplasm. The catalysed reaction is (R)-4'-phosphopantetheine + ATP + H(+) = 3'-dephospho-CoA + diphosphate. It participates in cofactor biosynthesis; coenzyme A biosynthesis; CoA from (R)-pantothenate: step 4/5. Functionally, reversibly transfers an adenylyl group from ATP to 4'-phosphopantetheine, yielding dephospho-CoA (dPCoA) and pyrophosphate. The protein is Phosphopantetheine adenylyltransferase of Shigella dysenteriae serotype 1 (strain Sd197).